A 106-amino-acid chain; its full sequence is Nucleoid-associated protein Exig_0019 (106 aa).

Low complexity predominate over residues 1–16 (MRGMGNMNNMMKQMQK). The tract at residues 1-23 (MRGMGNMNNMMKQMQKMQKDMAK) is disordered.

The protein belongs to the YbaB/EbfC family. Homodimer.

The protein localises to the cytoplasm. The protein resides in the nucleoid. Binds to DNA and alters its conformation. May be involved in regulation of gene expression, nucleoid organization and DNA protection. This chain is Nucleoid-associated protein Exig_0019, found in Exiguobacterium sibiricum (strain DSM 17290 / CCUG 55495 / CIP 109462 / JCM 13490 / 255-15).